Reading from the N-terminus, the 214-residue chain is uncharacterized protein (214 aa).

The next 7 membrane-spanning stretches (helical) occupy residues 4 to 23 (VSIVEIFLIISLPLLFFSSF), 35 to 57 (SFVHGAVLAVPLLLLRSFFLGYY), 67 to 89 (QWMRFFLFDYVFPLFCLPFFLFT), 96 to 118 (VSLVSGVSALFGAYTSFFFVHVY), 128 to 150 (ARVMTLVLYMTNLLQLHAHVSFS), 155 to 177 (LPLLGLIAALCIFLLMGAFSATV), and 187 to 209 (TVVYTSMLAGAGGVALLTHFFAV).

It is found in the cell membrane. This is an uncharacterized protein from Treponema pallidum (strain Nichols).